The following is a 253-amino-acid chain: Ipsdienol dehydrogenase (253 aa).

NAD(+) is bound by residues 12-40 (VTGG…FSRN) and Asp63. Ser149 contacts substrate. Tyr162 serves as the catalytic Proton acceptor. Lys166 contributes to the NAD(+) binding site.

The protein belongs to the short-chain dehydrogenases/reductases (SDR) family. Specifically expressed in male midguts. Expressed at higher level in the anterior midgut of fed males.

Its subcellular location is the cytoplasm. The protein localises to the cytosol. It catalyses the reaction (4R)-ipsdienol + NADP(+) = ipsdienone + NADPH + H(+). The enzyme catalyses (4R)-ipsdienol + NAD(+) = ipsdienone + NADH + H(+). Its function is as follows. Catalyzes the oxidation of racemic ipsdienol and (4R)-(-)-ipsdienol to form ipsdienone (2-methyl-6-methylene-2,7-octadien-4-one), an intermediate in the biosynthesis of pheromonal ipsdienol in male pine engraver beetles. In contrast, (4S)-(+)-ipsdienol is not a substrate. The protein is Ipsdienol dehydrogenase of Ips pini (Pine engraver beetle).